A 564-amino-acid chain; its full sequence is MSSERPDGSAVGDAVPKDTAVGGATDSSRTSNDASQTSQDTAVQETPPKEAPAKEAPAKPASELTQSKWKIALLLGLILMSMFLVALDRSILATAIPRITDEFDSAGDIGWYGSAYLLTCCSFQLLYGKVYTFFDIKTVFVANLLLFEVASAICGAAPSSTVLIVGRALAGIGAAGIFAGTIIAMVFLIPLRHRPKIQGLFGAVFGITSISGPLIGGGFTTNVTWRWCFYINLPIGGVALIAIALWMEVPNKPTANLPLAEKIRGLDLLGTAVFIPCIICLLLALQWGGTTYAWSSGRIIALLVVFSVTFVVYAALQAFRPKTSTIPPLYFLPLWFQTVKGVSAAESGVHLLPVMISMIVGSVTGGFFNAKVGYYSPLAVTGSTIMTIGAALIYTFKVDTSTGRWIGSLILYGIGLGWSFQAPNLAVQTSLAKKDVPSALALIMFVGLLAQAVFVSVGDNVFDTQAARNLSWIPGFTASELTSSGAVSFLTALSPSQRVEAIEDYNSALRKVFMIGLVLCAVCVPGLASMEWKSVKSRGSWDEKPAAKPTDKPTEEKKVPPEAV.

The interval 1-61 (MSSERPDGSA…PAKEAPAKPA (61 aa)) is disordered. The span at 25-44 (TDSSRTSNDASQTSQDTAVQ) shows a compositional bias: polar residues. A compositionally biased stretch (basic and acidic residues) spans 47–57 (PPKEAPAKEAP). 5 helical membrane passes run 71 to 91 (IALL…DRSI), 106 to 126 (AGDI…FQLL), 138 to 158 (TVFV…GAAP), 169 to 189 (LAGI…VFLI), and 199 to 219 (GLFG…GGGF). Asparagine 222 is a glycosylation site (N-linked (GlcNAc...) asparagine). Helical transmembrane passes span 227–247 (WCFY…ALWM), 265–285 (GLDL…LLAL), 299–319 (IIAL…LQAF), 348–368 (GVHL…GGFF), 376–396 (SPLA…IYTF), 405–425 (WIGS…APNL), and 438–458 (SALA…VSVG). The N-linked (GlcNAc...) asparagine glycan is linked to asparagine 469. The next 2 membrane-spanning stretches (helical) occupy residues 470 to 490 (LSWI…VSFL) and 512 to 532 (VFMI…SMEW). The segment at 534–564 (SVKSRGSWDEKPAAKPTDKPTEEKKVPPEAV) is disordered. Basic and acidic residues predominate over residues 539–564 (GSWDEKPAAKPTDKPTEEKKVPPEAV).

Belongs to the major facilitator superfamily. TCR/Tet family.

It is found in the membrane. Functionally, MFS-type transporter; part of the gene cluster that mediates the biosynthesis of the dimeric xanthones cryptosporioptides. This Cryptosporiopsis sp. (strain 8999) protein is MFS-type transporter dmxR4.